The chain runs to 106 residues: MPSKLALIQELPDRIQTAVEAAMGMSYQDAPNNVRRDLDNLHACLNKAKLTVSRMVTSLLEKPSVVAYLEGKAPEEAKPTLEERLRKLELSHSLPTTGSDPPPAKL.

Positions 1–73 are RNA-binding; it reads MPSKLALIQE…SVVAYLEGKA (73 aa).

The protein belongs to the nodaviridae B2 protein family. In terms of assembly, homodimer. Interacts with RNA-directed RNA polymerase.

The protein resides in the host mitochondrion. Its function is as follows. Binds double-strand RNA (dsRNA) with high affinity. Suppresses the host RNA silencing-based antiviral response. The sequence is that of Protein B2 (B2) from Heteronychus arator (African black beetle).